The following is a 456-amino-acid chain: Molybdate transporter 1 (456 aa).

A run of 9 helical transmembrane segments spans residues Leu67 to Val87, Ile110 to Met130, Val133 to Phe153, Pro177 to Val197, Val225 to Ile245, Ala309 to Met329, Leu354 to Leu374, Phe377 to Ala397, and Leu417 to Met437.

This sequence belongs to the SLC26A/SulP transporter (TC 2.A.53) family. Strongly expressed in roots. Detected in the vascular tissues of hypocotyls, in petioles and vascular tissues of cotyledons and leaves, in mesophyll cells, stamen, sepals and siliques.

It is found in the cell membrane. Its subcellular location is the endomembrane system. It localises to the mitochondrion membrane. Its activity is regulated as follows. Not inhibited by sulfate. Its function is as follows. High affinity molybdate transporter. Unable to transport sulfate. The sequence is that of Molybdate transporter 1 (MOT1) from Arabidopsis thaliana (Mouse-ear cress).